The primary structure comprises 122 residues: Small ribosomal subunit protein uS12 (122 aa).

The disordered stretch occupies residues 1-45 (MPTTNQLVRKERKRQTKKTATPALQGSPQRRGVCTRVSTTTPKKP). Residues 18-28 (KTATPALQGSP) are compositionally biased toward polar residues. Asp-89 bears the 3-methylthioaspartic acid mark.

The protein belongs to the universal ribosomal protein uS12 family. Part of the 30S ribosomal subunit. Contacts proteins S8 and S17. May interact with IF1 in the 30S initiation complex.

Its function is as follows. With S4 and S5 plays an important role in translational accuracy. Interacts with and stabilizes bases of the 16S rRNA that are involved in tRNA selection in the A site and with the mRNA backbone. Located at the interface of the 30S and 50S subunits, it traverses the body of the 30S subunit contacting proteins on the other side and probably holding the rRNA structure together. The combined cluster of proteins S8, S12 and S17 appears to hold together the shoulder and platform of the 30S subunit. This is Small ribosomal subunit protein uS12 from Rubrobacter xylanophilus (strain DSM 9941 / JCM 11954 / NBRC 16129 / PRD-1).